The primary structure comprises 229 residues: Enolase-phosphatase E1 (229 aa).

The protein belongs to the HAD-like hydrolase superfamily. MasA/MtnC family. As to quaternary structure, monomer. It depends on Mg(2+) as a cofactor.

It catalyses the reaction 5-methylsulfanyl-2,3-dioxopentyl phosphate + H2O = 1,2-dihydroxy-5-(methylsulfanyl)pent-1-en-3-one + phosphate. It functions in the pathway amino-acid biosynthesis; L-methionine biosynthesis via salvage pathway; L-methionine from S-methyl-5-thio-alpha-D-ribose 1-phosphate: step 3/6. Its pathway is amino-acid biosynthesis; L-methionine biosynthesis via salvage pathway; L-methionine from S-methyl-5-thio-alpha-D-ribose 1-phosphate: step 4/6. Functionally, bifunctional enzyme that catalyzes the enolization of 2,3-diketo-5-methylthiopentyl-1-phosphate (DK-MTP-1-P) into the intermediate 2-hydroxy-3-keto-5-methylthiopentenyl-1-phosphate (HK-MTPenyl-1-P), which is then dephosphorylated to form the acireductone 1,2-dihydroxy-3-keto-5-methylthiopentene (DHK-MTPene). This is Enolase-phosphatase E1 from Serratia proteamaculans (strain 568).